The chain runs to 90 residues: DNA-directed RNA polymerase subunit omega (90 aa).

It belongs to the RNA polymerase subunit omega family. The RNAP catalytic core consists of 2 alpha, 1 beta, 1 beta' and 1 omega subunit. When a sigma factor is associated with the core the holoenzyme is formed, which can initiate transcription.

The catalysed reaction is RNA(n) + a ribonucleoside 5'-triphosphate = RNA(n+1) + diphosphate. In terms of biological role, promotes RNA polymerase assembly. Latches the N- and C-terminal regions of the beta' subunit thereby facilitating its interaction with the beta and alpha subunits. This Saccharophagus degradans (strain 2-40 / ATCC 43961 / DSM 17024) protein is DNA-directed RNA polymerase subunit omega.